A 414-amino-acid chain; its full sequence is MDFVKELKSSQDYMNNELTYGAHNYDPIPVVLKRGKGVFVYDIEDRRYYDFLSAYSSVNQGHCHPDILNAMINQAKKLTICSRAFFSDSLGVCERYLTNLFGYDKVLMMNTGAEASETAYKLCRKWGYEVKKIPENSAKIIVCNNNFSGRTLGCVSASTDKKCKNNFGPFVPNFLKVPYDDLEALEKELQDPNVCAFIVEPVQGEAGVIVPSDSYFPGVASLCKKYNVLFVADEVQTGLGRTGKLLCTHHYGVKPDVILLGKALSGGHYPISAILANDDVMLVLKPGEHGSTYGGNPLAAAICVEALKVLINEKLCENADKLGAPFLQNLKEQLKDSKVVREVRGKGLLCAIEFKNDLVNVWDICLKFKENGLITRSVHDKTVRLTPPLCITKEQLDECTEIIVKTVKFFDDNL.

Cysteine 154 and cysteine 163 form a disulfide bridge. Lysine 262 carries the post-translational modification N6-(pyridoxal phosphate)lysine.

This sequence belongs to the class-III pyridoxal-phosphate-dependent aminotransferase family. As to quaternary structure, homodimer. It depends on pyridoxal 5'-phosphate as a cofactor. In terms of processing, the disulfide bond between Cys-154 and Cys-163 is reduced by TRX1 which increases OAT catalytic activity.

The protein resides in the cytoplasm. It catalyses the reaction a 2-oxocarboxylate + L-ornithine = L-glutamate 5-semialdehyde + an L-alpha-amino acid. The enzyme catalyses L-ornithine + 2-oxoglutarate = L-glutamate 5-semialdehyde + L-glutamate. The protein operates within amino-acid biosynthesis; L-proline biosynthesis; L-glutamate 5-semialdehyde from L-ornithine: step 1/1. Its activity is regulated as follows. Unlike for mammalian OATs, activity is increased by TRX1-mediated reduction of the disulfide bond between Cys-154 and Cys-163. Binding to TRX1 may also induce conformational changes that facilitate substrate binding. Its function is as follows. The enzyme has a very narrow substrate specificity and can only catalyze the transamination of alpha-ketoglutarate with ornithine or N-acetylornithine and, to a lesser extent, of glutamate-5-semialdehyde with glutamate and alanine. The polypeptide is Ornithine aminotransferase (Plasmodium falciparum (isolate 3D7)).